The sequence spans 251 residues: Triosephosphate isomerase (251 aa).

9 to 11 (NWK) lines the substrate pocket. The Electrophile role is filled by His-95. The Proton acceptor role is filled by Glu-167. Substrate is bound by residues Gly-173, Ser-213, and 234 to 235 (GG). Ser-213 carries the post-translational modification Phosphoserine.

It belongs to the triosephosphate isomerase family. Homodimer.

The protein localises to the cytoplasm. The enzyme catalyses D-glyceraldehyde 3-phosphate = dihydroxyacetone phosphate. It functions in the pathway carbohydrate biosynthesis; gluconeogenesis. The protein operates within carbohydrate degradation; glycolysis; D-glyceraldehyde 3-phosphate from glycerone phosphate: step 1/1. Its function is as follows. Involved in the gluconeogenesis. Catalyzes stereospecifically the conversion of dihydroxyacetone phosphate (DHAP) to D-glyceraldehyde-3-phosphate (G3P). The sequence is that of Triosephosphate isomerase from Shouchella clausii (strain KSM-K16) (Alkalihalobacillus clausii).